A 454-amino-acid polypeptide reads, in one-letter code: MRGEVVHIHLGQAGTQLGNSAWELYLLEHGLTQDGRKDPDSTVAGEGGSYDTFFTESSNGKYVPRSLFVDLDPSPIDEIRTGPYRQLFHPELLISGKEDAANNYARGHYTVGKEMAENVLDRIRKITDNCHSLQGFLVFHSFGGGTGSGFGALVLERLAQDYAKKCKLEFSVYPAPRVATAVVEPYNAVLATHSTLEHSDVTFLVDNEAVYDICRRNLDIPRPSYEHLNRLIAQVVSSITSSLRFDGALNVDLNEFQTNLVPFPRVHYPLISYAPVISATKSAHESFKTSELTLQCFEPNNQMVVCDPRNGKYMAVALLYRGDVVPRDTSAAVAALKAKSSFNLVEWCPTGFKIGINHQKPMSVPTASPADGGLASVDRSVSMLSNTTAIAEAWSRLDHKFDLMYSKRAFVHWYVGEGMEEGEFSEAREDLASLEKDYEEVAGDYNDVDVDAEY.

8 residues coordinate GTP: glutamine 12, aspartate 72, serine 141, glycine 145, threonine 146, threonine 180, asparagine 207, and asparagine 229. Aspartate 72 contributes to the Mg(2+) binding site. Glutamate 255 is a catalytic residue.

Belongs to the tubulin family. In terms of assembly, dimer of alpha and beta chains. A typical microtubule is a hollow water-filled tube with an outer diameter of 25 nm and an inner diameter of 15 nM. Alpha-beta heterodimers associate head-to-tail to form protofilaments running lengthwise along the microtubule wall with the beta-tubulin subunit facing the microtubule plus end conferring a structural polarity. Microtubules usually have 13 protofilaments but different protofilament numbers can be found in some organisms and specialized cells. Mg(2+) is required as a cofactor.

The protein resides in the cytoplasm. It localises to the cytoskeleton. It catalyses the reaction GTP + H2O = GDP + phosphate + H(+). Functionally, tubulin is the major constituent of microtubules, a cylinder consisting of laterally associated linear protofilaments composed of alpha- and beta-tubulin heterodimers. Microtubules grow by the addition of GTP-tubulin dimers to the microtubule end, where a stabilizing cap forms. Below the cap, tubulin dimers are in GDP-bound state, owing to GTPase activity of alpha-tubulin. The polypeptide is Tubulin alpha-A chain (tba-1) (Neurospora crassa (strain ATCC 24698 / 74-OR23-1A / CBS 708.71 / DSM 1257 / FGSC 987)).